Reading from the N-terminus, the 192-residue chain is Acetolactate synthase small subunit (192 aa).

The 75-residue stretch at 29–103 folds into the ACT domain; sequence IITVKVRNEM…DTLKVSDLTD (75 aa).

Belongs to the acetolactate synthase small subunit family. Dimer of large and small chains.

It carries out the reaction 2 pyruvate + H(+) = (2S)-2-acetolactate + CO2. The protein operates within amino-acid biosynthesis; L-isoleucine biosynthesis; L-isoleucine from 2-oxobutanoate: step 1/4. Its pathway is amino-acid biosynthesis; L-valine biosynthesis; L-valine from pyruvate: step 1/4. The sequence is that of Acetolactate synthase small subunit (ilvH) from Aquifex aeolicus (strain VF5).